The chain runs to 1704 residues: ABC transporter ced-7 (1704 aa).

The chain crosses the membrane as a helical span at residues 23 to 43; the sequence is VWTLFELIIPCLLLGPLVYLV. Residues asparagine 126 and asparagine 145 are each glycosylated (N-linked (GlcNAc...) asparagine). The next 3 membrane-spanning stretches (helical) occupy residues 256 to 276, 306 to 326, and 334 to 354; these read AFID…VIHI, VVMA…PLTF, and AALI…GAFV. An N-linked (GlcNAc...) asparagine glycan is attached at asparagine 359. 2 helical membrane passes run 362 to 382 and 389 to 409; these read NSAI…SYKL and ISSC…AVEA. 2 N-linked (GlcNAc...) asparagine glycosylation sites follow: asparagine 421 and asparagine 427. Residues 436–456 form a helical membrane-spanning segment; that stretch reads GWALVMMIVDILWMSIGALVV. An N-linked (GlcNAc...) asparagine glycan is attached at asparagine 481. The disordered stretch occupies residues 511 to 536; sequence NPMASTSLNPPNADSDSLLEGSTEAD. The span at 512–525 shows a compositional bias: polar residues; that stretch reads PMASTSLNPPNADS. The ABC transporter 1 domain maps to 546–777; it reads IIVRNLVKIW…FGTGYLLTVV (232 aa). Residue 580-587 participates in ATP binding; that stretch reads GHNGAGKS. Residues asparagine 678, asparagine 727, and asparagine 899 are each glycosylated (N-linked (GlcNAc...) asparagine). Polar residues-rich tracts occupy residues 888 to 902 and 911 to 921; these read RQNS…NASE and DTQSSTKSADS. The disordered stretch occupies residues 888–933; it reads RQNSRISHNSRNASEPSLKPAGYDTQSSTKSADSYQKLMDSQARGP. The chain crosses the membrane as a helical span at residues 963 to 983; it reads LFTQVLIPIILLGLVGSLTTL. N-linked (GlcNAc...) asparagine glycosylation is found at asparagine 986, asparagine 1012, and asparagine 1045. 7 helical membrane passes run 1126 to 1146, 1153 to 1173, 1176 to 1196, 1201 to 1221, 1234 to 1254, 1266 to 1286, and 1311 to 1331; these read LAPM…MFLI, FAHQ…ASLI, GILY…FHWM, AIVI…IYAV, LLII…FLIF, ILVN…AIIT, and LMGT…FKFV. Residues 1379–1603 form the ABC transporter 2 domain; the sequence is LVIKDLTKTF…YGNNYTMTLS (225 aa). Position 1411 to 1418 (1411 to 1418) interacts with ATP; it reads GVNGAGKT. N-linked (GlcNAc...) asparagine glycans are attached at residues asparagine 1597 and asparagine 1632.

Belongs to the ABC transporter superfamily. ABCA family. Ubiquitous in embryos. Expressed in larval germline precursors. Expression in larvae and adults is seen in amphid sheath cells, pharyngeal-intestinal valve and phasmid sheath cells. Low levels of expression are also seen in gonadal sheath cells.

Its subcellular location is the membrane. Functionally, functions in the engulfment of cell corpses during embryonic programmed cell death to translocate molecules that mediate homotypic adhesion between cell surfaces of the dying and engulfing cells. This chain is ABC transporter ced-7 (ced-7), found in Caenorhabditis elegans.